The chain runs to 246 residues: Pyridoxine 5'-phosphate synthase (246 aa).

N9 provides a ligand contact to 3-amino-2-oxopropyl phosphate. A 1-deoxy-D-xylulose 5-phosphate-binding site is contributed by 11 to 12 (DH). 3-amino-2-oxopropyl phosphate is bound at residue R20. The Proton acceptor role is filled by H45. 1-deoxy-D-xylulose 5-phosphate is bound by residues R47 and H52. The active-site Proton acceptor is E72. T102 is a 1-deoxy-D-xylulose 5-phosphate binding site. H193 (proton donor) is an active-site residue. Residues G194 and 215 to 216 (GH) contribute to the 3-amino-2-oxopropyl phosphate site.

It belongs to the PNP synthase family. Homooctamer; tetramer of dimers.

It localises to the cytoplasm. It catalyses the reaction 3-amino-2-oxopropyl phosphate + 1-deoxy-D-xylulose 5-phosphate = pyridoxine 5'-phosphate + phosphate + 2 H2O + H(+). The protein operates within cofactor biosynthesis; pyridoxine 5'-phosphate biosynthesis; pyridoxine 5'-phosphate from D-erythrose 4-phosphate: step 5/5. Its function is as follows. Catalyzes the complicated ring closure reaction between the two acyclic compounds 1-deoxy-D-xylulose-5-phosphate (DXP) and 3-amino-2-oxopropyl phosphate (1-amino-acetone-3-phosphate or AAP) to form pyridoxine 5'-phosphate (PNP) and inorganic phosphate. In Colwellia psychrerythraea (strain 34H / ATCC BAA-681) (Vibrio psychroerythus), this protein is Pyridoxine 5'-phosphate synthase.